Consider the following 159-residue polypeptide: Cyclic pyranopterin monophosphate synthase (159 aa).

Substrate-binding positions include 75–77 (MCH) and 113–114 (ME). The active site involves D128.

It belongs to the MoaC family. As to quaternary structure, homohexamer; trimer of dimers.

It catalyses the reaction (8S)-3',8-cyclo-7,8-dihydroguanosine 5'-triphosphate = cyclic pyranopterin phosphate + diphosphate. It functions in the pathway cofactor biosynthesis; molybdopterin biosynthesis. Catalyzes the conversion of (8S)-3',8-cyclo-7,8-dihydroguanosine 5'-triphosphate to cyclic pyranopterin monophosphate (cPMP). The sequence is that of Cyclic pyranopterin monophosphate synthase from Desulfatibacillum aliphaticivorans.